A 1492-amino-acid polypeptide reads, in one-letter code: MGDREAVLLEALSRCGLRGLSQAWVDSVWELDFTETEPLDSRIEAEITENGLETFSSLHENLLAFASEDPENSRSVWLLFSENDICRNSLVALLSHFIQAAANKKANAIQRILALNAAGLYFLLLEIPGSVANQVFHPVLFDKSVNALEKCWPRDPNASRKRKKDTLKSSQGDNRGGRKRPRPPRRDEQEMEDLSEEEQDEEEVYFSTRDLMHIRDSIFLVLKNFLRLLPKFSLKEKPQSVLHCIQIFINLTSFESVPQEMPFSDAVSVNHMKYVPELAYHGLWLLCLPIHGEGNQTVRRLFQRLLSVILMMKGGEGSNSALLVISPPVISARNQAIRFISFLVNELKEGTIPVLNILLQHICVKFPDKADYRVYAAQALVKLMENLPNAEYAIFIEWLYKYSKNSKISYRVFALEVVVALLDLPEREADVSLPHENLNFLQHKFLLQHMVFSRCSDKAPTVRSKALSCLAQCLEKNSTTAIDGVQELLQGSSCRTVFGTNITETTGNGTVYASNANEATTHPQKTMATLKIIEVSDTGDTLSSDGKEVLTMLRYRAGDEKTNVRKSALQVLVNVLKCHLIPCSSEDLSTLQDRCRDPAVSVRKQALTSLTELLLAQPHSVLIQKAWLTGLIPVVLDTESSVQEKALECLDQLLLQSITHYKRFKQDDERQKLTWDLLTLLTSESQDLSRYLTKAFHLWSKQDKFSSTFITNLISHTETEHTAPAWMILSKVAGSSPKLDYTKILQSWERVSRQTDADINTTGHILCVIGHIAKHLPADTRTHLIDHVKSWLKEFKSSPEVISPAVEALQKLCHAQTDKPEDVQDLLNDVCGEIVSACEHHISSVVMADCKDEPLDQDLLVKHLFTLGEVAQLCPAKVEKRVLLLVQSILASSVTTEQNSCHSDAEDPPVSQPLSQFKGSNMPSLIRAHAFITLGKLCLQHEDLAKKCIPALARELEVCDDVAIRNNVIIVICDLCIRYTTMVDRYIPNVSVCLRDRDPFIRKQTLIMLTNLLQEEFVKWKGSLFFRFVSVLVDPDPEIAKFGEFCLVHLLLKRNPVMFSQHFIECIFHFNCYEKHEKYNKFAQTKRERTLFSLKGKENKDKRMKIYKFLLEHFTDEQRFNLTTKISHNVLACFVDGILPIDMEANELLSDIFDIMSSKEIKLSAMRSKPGEDVGADDDEMAMANAVMQAAQKKLISQVQKKNFVENIIPIITSLKGFLEQHRIPAVRDLMNYLREMMQDYRDEIKDFFAADKQLAAELEYDMKKYEEQLEREQEENVQNPPSAESTGSPKGSPRAVNAISSPRSPNAPKSPLSTNAQTPGGAAPCTPITTPRVSILKGQGPRPRQMSLSTLAILNSARKAAQDNKKQRSKSIGAQPSTPSPARTTSSKQVTFRSEDQQSDSSLVGRMISTPDVTIENVTFGAGVSYISASQTPLSGRRGSIGSHEKERDVLCIMSPDKPAPQPRKWNVESPVQRRSIRQRISGKAPLKPSN.

Residues 152-201 (WPRDPNASRKRKKDTLKSSQGDNRGGRKRPRPPRRDEQEMEDLSEEEQDE) form a disordered region. Positions 189-201 (QEMEDLSEEEQDE) are enriched in acidic residues. 3 HEAT repeats span residues 543–581 (SSDG…CHLI), 583–619 (CSSE…AQPH), and 621–659 (VLIQ…QSIT). 3 disordered regions span residues 1269–1345 (QLER…PRPR), 1359–1406 (RKAA…SLVG), and 1454–1492 (IMSP…KPSN). Over residues 1277 to 1290 (NVQNPPSAESTGSP) the composition is skewed to polar residues. Residues 1377–1388 (PSTPSPARTTSS) are compositionally biased toward low complexity.

As to quaternary structure, component of the condensin-2 complex, which contains the smc2 and smc4 heterodimer, and three non SMC subunits, ncapg2, ncaph2 and ncapd3 that probably regulate the complex.

It localises to the nucleus. In terms of biological role, regulatory subunit of the condensin-2 complex, a complex which establishes mitotic chromosome architecture and is involved in physical rigidity of the chromatid axis. This chain is Condensin-2 complex subunit D3-L, found in Xenopus laevis (African clawed frog).